Consider the following 205-residue polypeptide: Molybdopterin synthase catalytic subunit (205 aa).

The interval 1–36 is disordered; the sequence is MQHPTLQPEVDPNPVVSSSSSSSSSNPLPAHLNPAN. Substrate is bound by residues 146–147, lysine 162, and 169–171; these read HR and KRE. Residues 179 to 205 are disordered; the sequence is GEGEGEWRANRDTDSQGNCRGDKVAEG. Basic and acidic residues predominate over residues 183–205; sequence GEWRANRDTDSQGNCRGDKVAEG.

It belongs to the MoaE family. MOCS2B subfamily. In terms of assembly, heterotetramer; composed of 2 small (MOCS2A) and 2 large (MOCS2B) subunits.

The protein localises to the cytoplasm. The catalysed reaction is 2 [molybdopterin-synthase sulfur-carrier protein]-C-terminal-Gly-aminoethanethioate + cyclic pyranopterin phosphate + H2O = molybdopterin + 2 [molybdopterin-synthase sulfur-carrier protein]-C-terminal Gly-Gly + 2 H(+). It functions in the pathway cofactor biosynthesis; molybdopterin biosynthesis. Catalytic subunit of the molybdopterin synthase complex, a complex that catalyzes the conversion of precursor Z into molybdopterin. Acts by mediating the incorporation of 2 sulfur atoms from thiocarboxylated MOCS2A into precursor Z to generate a dithiolene group. This chain is Molybdopterin synthase catalytic subunit, found in Ajellomyces capsulatus (strain NAm1 / WU24) (Darling's disease fungus).